Here is a 389-residue protein sequence, read N- to C-terminus: Dihydroorotase (389 aa).

Residues His-51 and His-53 each coordinate Zn(2+). Substrate contacts are provided by residues 53 to 55 and Asn-85; that span reads HVR. The Zn(2+) site is built by Lys-133, His-158, His-192, and Asp-254. Residue Lys-133 is modified to N6-carboxylysine. Asp-254 is an active-site residue. Substrate-binding positions include His-258 and 272-273; that span reads PG.

The protein belongs to the metallo-dependent hydrolases superfamily. DHOase family. Class I DHOase subfamily. Requires Zn(2+) as cofactor.

It carries out the reaction (S)-dihydroorotate + H2O = N-carbamoyl-L-aspartate + H(+). It participates in pyrimidine metabolism; UMP biosynthesis via de novo pathway; (S)-dihydroorotate from bicarbonate: step 3/3. In terms of biological role, catalyzes the reversible cyclization of carbamoyl aspartate to dihydroorotate. The protein is Dihydroorotase of Sulfurisphaera tokodaii (strain DSM 16993 / JCM 10545 / NBRC 100140 / 7) (Sulfolobus tokodaii).